The following is a 42-amino-acid chain: Photosystem I reaction center subunit IX (42 aa).

Residues 7–27 (YLSVAPVLSTLWFGILAGLLI) traverse the membrane as a helical segment.

It belongs to the PsaJ family.

It is found in the plastid. The protein resides in the chloroplast thylakoid membrane. Functionally, may help in the organization of the PsaE and PsaF subunits. In Lemna minor (Common duckweed), this protein is Photosystem I reaction center subunit IX.